Here is a 131-residue protein sequence, read N- to C-terminus: Large ribosomal subunit protein bL12 (131 aa).

The protein belongs to the bacterial ribosomal protein bL12 family. As to quaternary structure, homodimer. Part of the ribosomal stalk of the 50S ribosomal subunit. Forms a multimeric L10(L12)X complex, where L10 forms an elongated spine to which 2 to 4 L12 dimers bind in a sequential fashion. Binds GTP-bound translation factors.

Forms part of the ribosomal stalk which helps the ribosome interact with GTP-bound translation factors. Is thus essential for accurate translation. In Prochlorococcus marinus (strain NATL1A), this protein is Large ribosomal subunit protein bL12.